Reading from the N-terminus, the 126-residue chain is Thiocyanate hydrolase subunit alpha (126 aa).

As to quaternary structure, heterododecamer consisting of 4 alpha, 4 beta, and 4 gamma subunits.

It carries out the reaction thiocyanate + H2O + 2 H(+) = carbonyl sulfide + NH4(+). Its pathway is organosulfur degradation; thiocyanate degradation. Involved in the degradation of thiocyanate. The protein is Thiocyanate hydrolase subunit alpha (scnA) of Thiobacillus thioparus.